Here is a 170-residue protein sequence, read N- to C-terminus: Flavodoxin (170 aa).

One can recognise a Flavodoxin-like domain in the interval 5-165 (IGLFYGTQTG…RIKSWVAQLK (161 aa)).

It belongs to the flavodoxin family. FMN is required as a cofactor.

Low-potential electron donor to a number of redox enzymes. The chain is Flavodoxin (isiB) from Nostoc sp. (strain PCC 7120 / SAG 25.82 / UTEX 2576).